Reading from the N-terminus, the 245-residue chain is Carboxy-S-adenosyl-L-methionine synthase (245 aa).

Residues tyrosine 42, glycine 67–serine 69, aspartate 92–asparagine 93, aspartate 120–isoleucine 121, asparagine 135, and arginine 202 each bind S-adenosyl-L-methionine.

Belongs to the class I-like SAM-binding methyltransferase superfamily. Cx-SAM synthase family. Homodimer.

It catalyses the reaction prephenate + S-adenosyl-L-methionine = carboxy-S-adenosyl-L-methionine + 3-phenylpyruvate + H2O. In terms of biological role, catalyzes the conversion of S-adenosyl-L-methionine (SAM) to carboxy-S-adenosyl-L-methionine (Cx-SAM). The sequence is that of Carboxy-S-adenosyl-L-methionine synthase from Vibrio vulnificus (strain CMCP6).